A 319-amino-acid chain; its full sequence is Beta-ketoacyl-[acyl-carrier-protein] synthase III (319 aa).

Residues C113 and H246 contribute to the active site. The ACP-binding stretch occupies residues 247-251 (QANIR). N276 is a catalytic residue.

The protein belongs to the thiolase-like superfamily. FabH family. Homodimer.

Its subcellular location is the cytoplasm. It carries out the reaction malonyl-[ACP] + acetyl-CoA + H(+) = 3-oxobutanoyl-[ACP] + CO2 + CoA. It participates in lipid metabolism; fatty acid biosynthesis. In terms of biological role, catalyzes the condensation reaction of fatty acid synthesis by the addition to an acyl acceptor of two carbons from malonyl-ACP. Catalyzes the first condensation reaction which initiates fatty acid synthesis and may therefore play a role in governing the total rate of fatty acid production. Possesses both acetoacetyl-ACP synthase and acetyl transacylase activities. Its substrate specificity determines the biosynthesis of branched-chain and/or straight-chain of fatty acids. The polypeptide is Beta-ketoacyl-[acyl-carrier-protein] synthase III (Ehrlichia ruminantium (strain Welgevonden)).